The following is a 138-amino-acid chain: Large ribosomal subunit protein uL16 (138 aa).

Positions 1–16 are enriched in basic residues; that stretch reads MLIPRRVKHRKQHHPG. Residues 1–24 are disordered; it reads MLIPRRVKHRKQHHPGRSGAATGG.

It belongs to the universal ribosomal protein uL16 family. As to quaternary structure, part of the 50S ribosomal subunit.

Functionally, binds 23S rRNA and is also seen to make contacts with the A and possibly P site tRNAs. The protein is Large ribosomal subunit protein uL16 of Paenarthrobacter aurescens (strain TC1).